The primary structure comprises 408 residues: 8-amino-7-oxononanoate synthase (408 aa).

Residue Arg-20 participates in substrate binding. Pyridoxal 5'-phosphate is bound at residue 117 to 118 (GY). His-142 contacts substrate. Ser-188, His-216, and Thr-244 together coordinate pyridoxal 5'-phosphate. Position 247 is an N6-(pyridoxal phosphate)lysine (Lys-247). Thr-367 is a binding site for substrate.

The protein belongs to the class-II pyridoxal-phosphate-dependent aminotransferase family. BioF subfamily. Homodimer. Pyridoxal 5'-phosphate is required as a cofactor.

The enzyme catalyses 6-carboxyhexanoyl-[ACP] + L-alanine + H(+) = (8S)-8-amino-7-oxononanoate + holo-[ACP] + CO2. It functions in the pathway cofactor biosynthesis; biotin biosynthesis. Catalyzes the decarboxylative condensation of pimeloyl-[acyl-carrier protein] and L-alanine to produce 8-amino-7-oxononanoate (AON), [acyl-carrier protein], and carbon dioxide. This is 8-amino-7-oxononanoate synthase from Cupriavidus pinatubonensis (strain JMP 134 / LMG 1197) (Cupriavidus necator (strain JMP 134)).